The sequence spans 204 residues: Auxin-binding protein 4 (204 aa).

Positions 1–41 (MVRRRPATGAAPRPHLAAVGRGLLLASVLAAAASSLPVAES) are cleaved as a signal peptide. A disulfide bridge connects residues C43 and C196. Zn(2+) contacts are provided by H98, H100, and E104. A glycan (N-linked (GlcNAc...) asparagine) is linked at N136. H147 contacts Zn(2+). Residues 201–204 (KDEL) carry the Prevents secretion from ER motif.

As to quaternary structure, homodimer.

The protein resides in the endoplasmic reticulum lumen. Functionally, this is probably a receptor for the plant hormone auxin. The protein is Auxin-binding protein 4 (ABP4) of Zea mays (Maize).